The chain runs to 177 residues: MGTNTSSLRPEEVEEMQKGTNFTQKEIKKLYKRFKKLDKDGNGTISKDEFLMIPELAVNPLVKRVISIFDENGDGSVNFKEFIAALSVFNAQGDKQRKLEFAFKVYDIDGDGYISNGELFTVLKMMVGNNLSDVQLQQIVDKTILEADEDGDGKISFEEFAKTLSHQDLENKMTIRL.

EF-hand domains follow at residues 25-60 (KEIKKLYKRFKKLDKDGNGTISKDEFLMIPELAVNP), 62-92 (VKRVISIFDENGDGSVNFKEFIAALSVFNAQ), 94-129 (DKQRKLEFAFKVYDIDGDGYISNGELFTVLKMMVGN), and 135-170 (QLQQIVDKTILEADEDGDGKISFEEFAKTLSHQDLE). Ca(2+)-binding residues include Asp38, Asp40, Asn42, Thr44, Glu49, Asp70, Asn72, Asp74, Ser76, Glu81, Asp107, Asp109, Asp111, Tyr113, Glu118, Asp148, Asp150, Asp152, Lys154, and Glu159.

The protein belongs to the calcineurin regulatory subunit family. Composed of a catalytic subunit (A) and a regulatory subunit (B).

Its function is as follows. Regulatory subunit of calcineurin, a calcium-dependent, calmodulin stimulated protein phosphatase. Confers calcium sensitivity. The protein is Calcineurin subunit B (CNB1) of Naegleria gruberi (Amoeba).